Reading from the N-terminus, the 259-residue chain is Acyl-[acyl-carrier-protein]--UDP-N-acetylglucosamine O-acyltransferase (259 aa).

This sequence belongs to the transferase hexapeptide repeat family. LpxA subfamily. Homotrimer.

It localises to the cytoplasm. It catalyses the reaction a (3R)-hydroxyacyl-[ACP] + UDP-N-acetyl-alpha-D-glucosamine = a UDP-3-O-[(3R)-3-hydroxyacyl]-N-acetyl-alpha-D-glucosamine + holo-[ACP]. It participates in glycolipid biosynthesis; lipid IV(A) biosynthesis; lipid IV(A) from (3R)-3-hydroxytetradecanoyl-[acyl-carrier-protein] and UDP-N-acetyl-alpha-D-glucosamine: step 1/6. Functionally, involved in the biosynthesis of lipid A, a phosphorylated glycolipid that anchors the lipopolysaccharide to the outer membrane of the cell. This is Acyl-[acyl-carrier-protein]--UDP-N-acetylglucosamine O-acyltransferase from Psychrobacter sp. (strain PRwf-1).